A 435-amino-acid chain; its full sequence is Transmembrane protein 130 (435 aa).

Residues 1-24 form the signal peptide; sequence MAQAVWSRLGRILWLACLLPWAPA. Over 25-339 the chain is Extracellular; sequence GVAAGLYELN…IQVWPSRIQP (315 aa). Asn-34, Asn-197, and Asn-300 each carry an N-linked (GlcNAc...) asparagine glycan. One can recognise a PKD domain in the interval 147-233; it reads WPSSYLTKTV…AVKQKTGDFS (87 aa). Residues 340-360 traverse the membrane as a helical segment; that stretch reads AVFAFPCATLITVMLAFIMYM. At 361–435 the chain is on the cytoplasmic side; it reads TLRNATQQKD…LYKSVKTYTV (75 aa).

It localises to the golgi apparatus membrane. This chain is Transmembrane protein 130 (TMEM130), found in Homo sapiens (Human).